The following is a 797-amino-acid chain: GDH/6PGL endoplasmic bifunctional protein (797 aa).

The first 24 residues, 1–24, serve as a signal peptide directing secretion; it reads MKCPGVWGMLTVTMCVVFLGCPQA. A Pyrrolidone carboxylic acid modification is found at glutamine 25. The interval 25-531 is hexose-6-phosphate dehydrogenase; the sequence is QELQGHVSVI…SGSHLSFSLG (507 aa). NADP(+)-binding positions include 37 to 44 and tyrosine 154; that span reads GATGDLAK. N-linked (GlcNAc...) asparagine glycosylation is present at asparagine 162. Residue lysine 179 coordinates NADP(+). Residues lysine 179, 209-213, glutamate 248, and aspartate 267 each bind D-glucose 6-phosphate; that span reads HYLGK. At lysine 213 the chain carries N6-succinyllysine. Histidine 272 serves as the catalytic Proton acceptor. N-linked (GlcNAc...) asparagine glycosylation occurs at asparagine 287. Positions 365 and 370 each coordinate D-glucose 6-phosphate. Arginine 375 is an NADP(+) binding site. A linker region spans residues 532–545; sequence QPEQLVPGPGSTPR. Positions 546–797 are 6-phosphogluconolactonase; the sequence is PSDFQVLGAK…WYMDYEAFLG (252 aa). Tryptophan 623 lines the NADP(+) pocket. Asparagine 689 carries an N-linked (GlcNAc...) asparagine glycan.

It in the N-terminal section; belongs to the glucose-6-phosphate dehydrogenase family. This sequence in the C-terminal section; belongs to the glucosamine/galactosamine-6-phosphate isomerase family. 6-phosphogluconolactonase subfamily. Homodimer.

The protein localises to the endoplasmic reticulum lumen. The enzyme catalyses D-glucose 6-phosphate + NAD(+) = 6-phospho-D-glucono-1,5-lactone + NADH + H(+). It carries out the reaction D-glucose 6-phosphate + NADP(+) = 6-phospho-D-glucono-1,5-lactone + NADPH + H(+). It catalyses the reaction 6-phospho-D-glucono-1,5-lactone + H2O = 6-phospho-D-gluconate + H(+). The catalysed reaction is 2-deoxy-D-glucose 6-phosphate + NAD(+) = 2-deoxy-6-phospho-D-glucono-1,5-lactone + NADH + H(+). The enzyme catalyses 2-deoxy-D-glucose 6-phosphate + NADP(+) = 2-deoxy-6-phospho-D-glucono-1,5-lactone + NADPH + H(+). It carries out the reaction D-galactose 6-phosphate + NADP(+) = 6-phospho-D-galactono-1,5-lactone + NADPH + H(+). It catalyses the reaction D-galactose 6-phosphate + NAD(+) = 6-phospho-D-galactono-1,5-lactone + NADH + H(+). The catalysed reaction is D-glucosamine 6-phosphate + NADP(+) = 2-amino-2-deoxy-6-phospho-D-glucono-1,5-lactone + NADPH + 2 H(+). The enzyme catalyses D-glucose + NAD(+) = D-glucono-1,5-lactone + NADH + H(+). It carries out the reaction D-glucose + NADP(+) = D-glucono-1,5-lactone + NADPH + H(+). It catalyses the reaction D-glucose 6-sulfate + NADP(+) = 6-sulfo-D-glucono-1,5-lactone + NADPH + H(+). It functions in the pathway carbohydrate degradation; pentose phosphate pathway; D-ribulose 5-phosphate from D-glucose 6-phosphate (oxidative stage). It participates in carbohydrate degradation; pentose phosphate pathway; D-ribulose 5-phosphate from D-glucose 6-phosphate (oxidative stage): step 2/3. In terms of biological role, bifunctional enzyme localized in the lumen of the endoplasmic reticulum that catalyzes the first two steps of the oxidative branch of the pentose phosphate pathway/shunt, an alternative to glycolysis and a major source of reducing power and metabolic intermediates for biosynthetic processes. Has a hexose-6-phosphate dehydrogenase activity, with broad substrate specificity compared to glucose-6-phosphate 1-dehydrogenase/G6PD, and catalyzes the first step of the pentose phosphate pathway. In addition, acts as a 6-phosphogluconolactonase and catalyzes the second step of the pentose phosphate pathway. May have a dehydrogenase activity for alternative substrates including glucosamine 6-phosphate and glucose 6-sulfate. The main function of this enzyme is to provide reducing equivalents such as NADPH to maintain the adequate levels of reductive cofactors in the oxidizing environment of the endoplasmic reticulum. By producing NADPH that is needed by reductases of the lumen of the endoplasmic reticulum like corticosteroid 11-beta-dehydrogenase isozyme 1/HSD11B1, indirectly regulates their activity. This chain is GDH/6PGL endoplasmic bifunctional protein, found in Oryctolagus cuniculus (Rabbit).